The sequence spans 631 residues: Probable protein phosphatase 2C 31 (631 aa).

Disordered stretches follow at residues 119–142 (GPLHATSGRFSEASGSASTASDRF) and 205–231 (LSGRRSNGPAEPTTKSDGDYRSTPKGN). Residues 131–140 (ASGSASTASD) show a composition bias toward polar residues. Residues 221–622 (DGDYRSTPKG…DDVSIIVMSF (402 aa)) form the PPM-type phosphatase domain. Positions 261 and 262 each coordinate Mn(2+). A disordered region spans residues 324-347 (GGDDDPDAERKAKRGRIERNADDD). Positions 550 and 613 each coordinate Mn(2+).

Belongs to the PP2C family. Mg(2+) is required as a cofactor. It depends on Mn(2+) as a cofactor.

The enzyme catalyses O-phospho-L-seryl-[protein] + H2O = L-seryl-[protein] + phosphate. It carries out the reaction O-phospho-L-threonyl-[protein] + H2O = L-threonyl-[protein] + phosphate. The polypeptide is Probable protein phosphatase 2C 31 (Oryza sativa subsp. japonica (Rice)).